We begin with the raw amino-acid sequence, 503 residues long: MTDQSGNGVRSGSASEAPPSAKADFVVVANRLPIDQVNLPDGSTEWKRSPGGLVTALEPLLRRRHGAWIGWPGVPEDADDPDASTEPIEQDGMTLVPVRLSAADVAKYYEGFSNATLWPLYHDVIVKPTYHREWWERYVEVNRRFAEAAARTAAEGATVWVQDYQLQLVPKMLRMLRPDLTIGFFLHIPFPPVELFLQMPWRTEIIEGLLGADLVGFHLPGGAQNFLILARRLLGAVTSRGNVGVRSRFGEVQFGFRKVKVGAFPISIDSAELDQHARTRATRQRAKEIRAELGNPRKVLLGVDRLDYTKGIDVRLRAFSELLEEGRIDPEDTVLVQLATPSRERVQSYIEMREDIERQVGHVNGEFGKVGHPVLHYLHRPIPREDLVAFFVAADVMLVTPLRDGMNLVAKEYVACRHDLGGALVLSEFTGAAAELRQAYLTNPHHLEGVKDAIEAALNQSPEEGRRRMRALRRQVLAHDVDRWARSFLDALASREPINEESH.

A compositionally biased stretch (polar residues) spans 1–14 (MTDQSGNGVRSGSA). The tract at residues 1–20 (MTDQSGNGVRSGSASEAPPS) is disordered. Residue Arg31 participates in D-glucose 6-phosphate binding. 51 to 52 (GG) lines the UDP-alpha-D-glucose pocket. D-glucose 6-phosphate is bound by residues Tyr109 and Asp163. UDP-alpha-D-glucose is bound by residues Arg305 and Lys310. Arg343 is a binding site for D-glucose 6-phosphate. 408–412 (LVAKE) is a UDP-alpha-D-glucose binding site.

This sequence belongs to the glycosyltransferase 20 family. In terms of assembly, homotetramer.

It catalyses the reaction ADP-alpha-D-glucose + D-glucose 6-phosphate = alpha,alpha-trehalose 6-phosphate + ADP + H(+). The enzyme catalyses CDP-alpha-D-glucose + D-glucose 6-phosphate = alpha,alpha-trehalose 6-phosphate + CDP + H(+). The catalysed reaction is GDP-alpha-D-glucose + D-glucose 6-phosphate = alpha,alpha-trehalose 6-phosphate + GDP + H(+). It carries out the reaction TDP-alpha-D-glucose + D-glucose 6-phosphate = 5-methyl-UDP + alpha,alpha-trehalose 6-phosphate + H(+). It catalyses the reaction D-glucose 6-phosphate + UDP-alpha-D-glucose = alpha,alpha-trehalose 6-phosphate + UDP + H(+). It functions in the pathway glycan biosynthesis; trehalose biosynthesis. In terms of biological role, probably involved in the osmoprotection via the biosynthesis of trehalose and in the production of glycogen and alpha-glucan via the TreS-Pep2 branch involved in the biosynthesis of maltose-1-phosphate (M1P). Catalyzes the transfer of glucose from UDP-glucose (UDP-Glc) to D-glucose 6-phosphate (Glc-6-P) to form trehalose-6-phosphate. Probably also able to use ADP-Glc, CDP-Glc, GDP-Glc and TDP-Glc as glucosyl donors. In Mycolicibacterium gilvum (strain PYR-GCK) (Mycobacterium gilvum (strain PYR-GCK)), this protein is Trehalose-6-phosphate synthase.